The sequence spans 512 residues: Protein maelstrom homolog (512 aa).

The segment at residues 9–75 (AKGPFYFFMM…NPKEAGGYGE (67 aa)) is a DNA-binding region (HMG box). Disordered regions lie at residues 49-72 (APHE…EAGG), 360-421 (RMSK…GTRA), and 439-465 (QSAN…DPQS). The span at 360-370 (RMSKLTTTSDN) shows a compositional bias: polar residues. Basic and acidic residues predominate over residues 379–388 (RSTDRTDRDV). Polar residues-rich tracts occupy residues 393–421 (IYSS…GTRA) and 439–449 (QSANRSPTKKN). Residues 451-464 (WSRENKLTEVRDPQ) show a composition bias toward basic and acidic residues.

Belongs to the maelstrom family.

The protein resides in the cytoplasm. Its subcellular location is the nucleus. In terms of biological role, plays a central role during gametogenesis by repressing transposable elements and preventing their mobilization, which is essential for the germline integrity. Probably acts via the piRNA metabolic process, which mediates the repression of transposable elements during meiosis by forming complexes composed of piRNAs and Piwi proteins and governs the repression of transposons. The polypeptide is Protein maelstrom homolog (mael) (Culex quinquefasciatus (Southern house mosquito)).